The sequence spans 208 residues: MKIVEVKHPLVKHKLGLMRENDISTKRFRELASEVGSLLTYEATADLETETVTIDGWNGPVEIEQIKGKKITVVPILRAGLGMMEGVLEHVPSARISVVGIYRNEETLEPVPYFQKLVSNIDERMALVVDPMLATGGSMIATIDLLKNAGCHSIKVLVLVAAPEGIAALEKAHPDVELYTASIDKGLNEHGYIIPGLGDAGDKIFGTK.

Residues Arg-78, Arg-103, and 130-138 (DPMLATGGS) each bind 5-phospho-alpha-D-ribose 1-diphosphate. Uracil is bound by residues Ile-193 and 198–200 (GDA). Residue Asp-199 coordinates 5-phospho-alpha-D-ribose 1-diphosphate.

It belongs to the UPRTase family. Requires Mg(2+) as cofactor.

It catalyses the reaction UMP + diphosphate = 5-phospho-alpha-D-ribose 1-diphosphate + uracil. The protein operates within pyrimidine metabolism; UMP biosynthesis via salvage pathway; UMP from uracil: step 1/1. Its activity is regulated as follows. Allosterically activated by GTP. Its function is as follows. Catalyzes the conversion of uracil and 5-phospho-alpha-D-ribose 1-diphosphate (PRPP) to UMP and diphosphate. The sequence is that of Uracil phosphoribosyltransferase from Citrobacter koseri (strain ATCC BAA-895 / CDC 4225-83 / SGSC4696).